Reading from the N-terminus, the 1820-residue chain is uncharacterized protein (1820 aa).

Disordered stretches follow at residues 1 to 73 (MQWT…TLSG), 86 to 158 (TTTT…VRSA), 226 to 260 (GSSG…NNNY), 286 to 366 (EERA…QETE), 453 to 497 (DVQD…RNLS), 519 to 548 (LSSI…TDTA), 577 to 597 (GNSS…PPTP), 619 to 689 (GAGT…TASG), and 735 to 830 (HSHN…TPSS). The segment covering 20 to 31 (NRNSIEQRTPAN) has biased composition (polar residues). The segment covering 86 to 128 (TTTTTIIESSSSTNTTLEKNSPSPAGGSCSSGSGSLSPAYLQH) has biased composition (low complexity). The span at 129-146 (HLQHHGSPLHHLQVHHHT) shows a compositional bias: basic residues. Residues 247–259 (SNSSNCSSQFNNN) are compositionally biased toward low complexity. A coiled-coil region spans residues 265–308 (VDSLDDMLRKLTELEQRVIEAEERAEEAEDKVRAMEQRLSEWPK). A compositionally biased stretch (basic and acidic residues) spans 294-305 (DKVRAMEQRLSE). Over residues 346–358 (ASGGATAGAAGSG) the composition is skewed to low complexity. A coiled-coil region spans residues 362-438 (TQETEKTITS…LKNHIANQSQ (77 aa)). Polar residues predominate over residues 453–463 (DVQDFTGSGSN). Residues Ser542 and Ser543 each carry the phosphoserine modification. A compositionally biased stretch (low complexity) spans 623-632 (GTSTAESTAS). The segment covering 655-669 (HGSGTGIGTGDGHGT) has biased composition (gly residues). The span at 738–769 (NSSSTDNTETSTSGSASSPSKSLKTSSSLSPA) shows a compositional bias: low complexity. Polar residues predominate over residues 787 to 818 (QSRTSTTPSSRINQHLQPSQHQHHTLSNQNHG). PH domains lie at 909–1003 (SLEK…NVQR) and 1017–1124 (KPTV…VVSG). 3 positions are modified to phosphoserine: Ser1073, Ser1075, and Ser1077. The MyTH4 domain maps to 1159–1378 (HTKDTITAPL…PSRMEVLSIL (220 aa)). One can recognise an FERM domain in the interval 1389–1712 (HAIPVHMMNS…DYMNALGHTV (324 aa)). 2 disordered regions span residues 1713–1748 (PGTP…ATGF) and 1764–1820 (ATHT…QRIK). Residues 1714 to 1724 (GTPQMNSLTRN) show a composition bias toward polar residues. Residues 1764–1781 (ATHTLNSNHSHTLSSSHH) are compositionally biased toward low complexity. Residues 1805–1820 (HQPDILKSTPDHQRIK) are compositionally biased toward basic and acidic residues.

This is an uncharacterized protein from Drosophila melanogaster (Fruit fly).